A 66-amino-acid polypeptide reads, in one-letter code: Alpha-like toxin Bom3 (66 aa).

The 65-residue stretch at 2-66 (RDGYIAQPEN…PIVVGGEKCH (65 aa)) folds into the LCN-type CS-alpha/beta domain. Disulfide bonds link Cys12/Cys65, Cys16/Cys37, Cys23/Cys47, and Cys27/Cys49.

It belongs to the long (4 C-C) scorpion toxin superfamily. Sodium channel inhibitor family. Alpha subfamily. Expressed by the venom gland.

It is found in the secreted. Its function is as follows. Alpha toxins bind voltage-independently at site-3 of sodium channels (Nav) and inhibit the inactivation of the activated channels, thereby blocking neuronal transmission. As it competes neither with the classical alpha-toxin AaH2 nor the beta-toxin Css2, this toxin is an alpha-like toxin. The polypeptide is Alpha-like toxin Bom3 (Buthus occitanus mardochei (Moroccan scorpion)).